The sequence spans 541 residues: Arginine--tRNA ligase (541 aa).

The short motif at 119–129 (ANPTGPLHIGH) is the 'HIGH' region element.

Belongs to the class-I aminoacyl-tRNA synthetase family. As to quaternary structure, monomer.

It localises to the cytoplasm. It catalyses the reaction tRNA(Arg) + L-arginine + ATP = L-arginyl-tRNA(Arg) + AMP + diphosphate. This Helicobacter acinonychis (strain Sheeba) protein is Arginine--tRNA ligase.